Consider the following 2195-residue polypeptide: MGIFDNQNKFEPTISNTLRSLTNGNTQTFDEQVVARNKEIMKKRNEKKKEKDRIIEKGQLTWSYFSDSKQNKEKEKENRQIFNKFKEIVLEMIGDDEIPSDEIASAVYETFMIVANPHKDKASKCESLRQIFHSFFKVAMYNKLSEQVGLLLQIKNPFESDSKASNESVQTIDSFESMEWQLPSKYQLQFEDNDEMSIFDEINHFINTKINNNLDEQKEKEKEKLINTPLSDMVLIHQPGQIKKSKKLKKLAAAGGSNNLESNNVVDSTYTIEWLREECSVISIGLGIPSEEIYNTIMSFLKNKKETIEEDMIGLLGFDHLELIADIIKYRDSILGSVVSGYRASNHSGPLNHFSIQTKDEKDFDKQLKKDDKKRYKNDQQQQQQQQYQEEQIKFIDHSQQSFEQPTIYNQKEFTGGDVCIDLPYGGKIALPKGTVRTEKTTHTEVMVPYSLAKPFADNEKLIEIGESIAEISRAAFGSIKKLNRIQSRVFESAYKSNENILISAPTGAGKTNIALLTILHEIESNINPYGYLDKDNFKIIYIAPLKALASEMVEKFSNSLKYLGIVSKELTGDMQLTQKELKETQIIVTTPEKWDVITRKSSDVALTKLVRLIIIDEIHLLHEERGPVLECIVARTLRQVETTQEMIRIVGLSATLPNYKDVARFIRAPASGTHFFDSSYRPVPLTQNFIGVKDNQGIMVMKNNMNQLCYERLEKSLKEGHQVMIFVHSRKDTVKSAEILSDMAKEKHFRFSNEEPSFGAKKEFEKVKSKEIRSLFQHGISVHHAGLLRSDRNVVEKYFANGTIKVLVCTATLAWGVNLPAHTVIIKGTQVYNAKNGGFMDLGISDVMQIFGRAGRPQFDTSGEGFLLTSKDKLDHYLSLMSSSMPIESKFITNLEDHLNAEIVLGTVSNVNEAVNWLSYTYLFIRMLQNPLVYGIPSSQRSKDPQLEEFKREIIIRAAKKLEQCKMTRFDEQSENLGMTELGRIASHYYIKHPSIETFNEMLNDQLGQDQVLNILSNSSEFENITLREEESTELDKLAENQCYYELTVLDSHSKVKCLLQAFFSRANIDGFSLVSDSNYTVQNSSRILRGLFEISLKKGWCTVSKTILDLCKMVDHQLWHFESPLRQAKVLSLDTIRKIEERDWTPERICDMEIGELSFVLGNQLIAKTTRKIAQQFPQLDFEIQVQPITANIIRINMTLIPMFSWNDKMHGDSQPFWIWVQDNESQYIFHSEYFMLTKKIYNQTEPITLTCIIPLPNPMPSQFFLHYISDRWLGSEGIREISFRHLVLPQQDRVVNTELLDLQPLPKEALKNKDFESLFKFSHFNPIQTQVFHTLYYTNNNVLLGSPTGSGKTICAELAMFKVFRDEPHMKVVYIAPLKALVRERMNDWKVKFQEKLGKKLVELTGDYTPNMIALQNADIVTTTPEKWDGISRNWKNRSYVTSVSLLIIDEIHLIGELRGPILEVIVSRMKLISKQTGVNIRVVGLSTAMANAIDLSEWMGIDRVGLFNFRPSCRPVPIEVHIQGFQGKNYCPRMQTMNKPSFAAIATYSPKKPVLIFVSSRRQTRLTALDLISYLVVDNDPLQWIQKGFDIEPTLARVKDQHLRHTLSFGIGMHHAGLNDGDRTIVESLFGENKIQILISTSTLAWGVNLPAHLVIIKGTEYFDGKTKRYVDFPLTDVLQMIGRAGRPQFDKEGKAMVMVHEPKKQFYKKFLYDPFPVESHLKDFLHDHLNAEIVSGTIQSKQGAINYLVNTFFFRRLVVSPSYYGLEDNSVEAVNQYLSDLLDSTLADLEQSSCIEINEYDEIIPMSMGKIASFYYLNYKTVQNFSDNIKRDSDIKTLLRVLSDAAEYSEFPVRHNEEILNQELNENLPIKIGNYEDSHTKVHLLLQAHFQRCPLPITDFTTDTKSALDQGIRILQAMIDVSFEYGYFATAIQVIRLLQMLVQGRWDYDSSLMTLPHINKDFADFLSSNLILSNGEQISNLSDMLKIPRDKIHLSLTNIGLSDSQIKETLNVIDHLPKVKIEYFINTNNNSNNNDDNNNENNNNNNKKNNNNNNNNNKSIVYSGQEFNIKIKVTRENKKFSNGHAFAPLYSKDKDEGWIMVLTDEKEQMIGFKRVPQMISNSVTANFKIPKAPFQSSTNYNVKLYSDTYMGLDYFHTFQVPIVNKKQIRNDDQDGDTIILLEAATGDMKK.

The stretch at 31–88 (EQVVARNKEIMKKRNEKKKEKDRIIEKGQLTWSYFSDSKQNKEKEKENRQIFNKFKEI) forms a coiled coil. Residues 367–378 (QLKKDDKKRYKN) are compositionally biased toward basic and acidic residues. The tract at residues 367–387 (QLKKDDKKRYKNDQQQQQQQQ) is disordered. The Helicase ATP-binding 1 domain maps to 492-675 (ESAYKSNENI…FIRAPASGTH (184 aa)). ATP is bound at residue 505 to 512 (APTGAGKT). Residues 617-620 (DEIH) carry the DEAH box motif. Residues 705–920 (NMNQLCYERL…NVNEAVNWLS (216 aa)) enclose the Helicase C-terminal 1 domain. The SEC63 1 domain occupies 980–1286 (MTELGRIASH…GSEGIREISF (307 aa)). The Helicase ATP-binding 2 domain occupies 1336-1511 (HTLYYTNNNV…WMGIDRVGLF (176 aa)). Position 1349–1356 (1349–1356 (SPTGSGKT)) interacts with ATP. The DEAH box motif lies at 1453–1456 (DEIH). Residues 1545 to 1750 (SFAAIATYSP…GTIQSKQGAI (206 aa)) enclose the Helicase C-terminal 2 domain. Residues 1810–1969 (PMSMGKIASF…LPHINKDFAD (160 aa)) form the SEC63 2 domain. Positions 2032 to 2062 (TNNNSNNNDDNNNENNNNNNKKNNNNNNNNN) are enriched in low complexity. The segment at 2032–2064 (TNNNSNNNDDNNNENNNNNNKKNNNNNNNNNKS) is disordered.

The protein belongs to the helicase family.

It is found in the nucleus. The protein localises to the cytoplasm. Its subcellular location is the cytosol. The enzyme catalyses Couples ATP hydrolysis with the unwinding of duplex DNA by translocating in the 3'-5' direction.. It catalyses the reaction ATP + H2O = ADP + phosphate + H(+). In terms of biological role, ATPase involved both in DNA repair and rescue of stalled ribosomes. The protein is Activating signal cointegrator 1 complex subunit 3 (ascc3) of Dictyostelium discoideum (Social amoeba).